The following is a 445-amino-acid chain: 8-amino-7-oxononanoate synthase (445 aa).

R40 contacts substrate. Residue 131 to 132 (GY) coordinates pyridoxal 5'-phosphate. H156 is a binding site for substrate. 3 residues coordinate pyridoxal 5'-phosphate: S202, H230, and T258. The residue at position 261 (K261) is an N6-(pyridoxal phosphate)lysine. T377 lines the substrate pocket. The segment at 408-445 (ASEGQTRRDAEQPPRSLRSLPPEGAAASLGAARRETAA) is disordered.

The protein belongs to the class-II pyridoxal-phosphate-dependent aminotransferase family. BioF subfamily. As to quaternary structure, homodimer. Pyridoxal 5'-phosphate serves as cofactor.

It carries out the reaction 6-carboxyhexanoyl-[ACP] + L-alanine + H(+) = (8S)-8-amino-7-oxononanoate + holo-[ACP] + CO2. It participates in cofactor biosynthesis; biotin biosynthesis. Functionally, catalyzes the decarboxylative condensation of pimeloyl-[acyl-carrier protein] and L-alanine to produce 8-amino-7-oxononanoate (AON), [acyl-carrier protein], and carbon dioxide. The protein is 8-amino-7-oxononanoate synthase of Burkholderia ambifaria (strain MC40-6).